The chain runs to 396 residues: tRNA(Met) cytidine acetate ligase (396 aa).

ATP is bound by residues 9–22 (IVEY…HLHH), G103, N154, and R179.

The protein belongs to the TmcAL family.

It localises to the cytoplasm. It carries out the reaction cytidine(34) in elongator tRNA(Met) + acetate + ATP = N(4)-acetylcytidine(34) in elongator tRNA(Met) + AMP + diphosphate. In terms of biological role, catalyzes the formation of N(4)-acetylcytidine (ac(4)C) at the wobble position of elongator tRNA(Met), using acetate and ATP as substrates. First activates an acetate ion to form acetyladenylate (Ac-AMP) and then transfers the acetyl group to tRNA to form ac(4)C34. This is tRNA(Met) cytidine acetate ligase from Fusobacterium nucleatum subsp. nucleatum (strain ATCC 25586 / DSM 15643 / BCRC 10681 / CIP 101130 / JCM 8532 / KCTC 2640 / LMG 13131 / VPI 4355).